The primary structure comprises 200 residues: Dephospho-CoA kinase (200 aa).

The region spanning 3–200 (IFGLTGGIGS…LNVNNKCNMD (198 aa)) is the DPCK domain. Position 11–16 (11–16 (GSGKSL)) interacts with ATP.

It belongs to the CoaE family.

It is found in the cytoplasm. It catalyses the reaction 3'-dephospho-CoA + ATP = ADP + CoA + H(+). It functions in the pathway cofactor biosynthesis; coenzyme A biosynthesis; CoA from (R)-pantothenate: step 5/5. In terms of biological role, catalyzes the phosphorylation of the 3'-hydroxyl group of dephosphocoenzyme A to form coenzyme A. The protein is Dephospho-CoA kinase of Ehrlichia canis (strain Jake).